A 772-amino-acid chain; its full sequence is Annulin (772 aa).

2 S-palmitoyl cysteine lipidation sites follow: Cys-4 and Cys-5. The tract at residues 15–57 (NEGSGGGIPLMPVRGGSTRRPDSLPKPPAAVVPSPPSPGDVPD) is disordered. Positions 38–53 (LPKPPAAVVPSPPSPG) are enriched in pro residues. Active-site residues include His-400 and Asp-427. Residues Asn-467, Asp-469, Glu-517, and Glu-522 each coordinate Ca(2+).

This sequence belongs to the transglutaminase superfamily. Transglutaminase family. Requires Ca(2+) as cofactor. As to expression, has an annular, or ring-like expression pattern in epithelial annuli of developing limb segment boundary cells. In embryos, it is seen in gastrulating cells, in cells surrounding rapidly dividing neuroblasts, and in muscle pioneer cells invaginating to form apodemes.

The protein localises to the cell membrane. The enzyme catalyses L-glutaminyl-[protein] + L-lysyl-[protein] = [protein]-L-lysyl-N(6)-5-L-glutamyl-[protein] + NH4(+). Functionally, participates in morphogenetic activities of the cells, maybe by stabilizing the membrane or subcortical structures of cells that are under mechanical stress. Probably catalyzes the cross-linking of proteins and the conjugation of polyamines to proteins. This chain is Annulin, found in Schistocerca americana (American grasshopper).